A 434-amino-acid polypeptide reads, in one-letter code: Probable glycine dehydrogenase (decarboxylating) subunit 1 (434 aa).

Belongs to the GcvP family. N-terminal subunit subfamily. In terms of assembly, the glycine cleavage system is composed of four proteins: P, T, L and H. In this organism, the P 'protein' is a heterodimer of two subunits.

It catalyses the reaction N(6)-[(R)-lipoyl]-L-lysyl-[glycine-cleavage complex H protein] + glycine + H(+) = N(6)-[(R)-S(8)-aminomethyldihydrolipoyl]-L-lysyl-[glycine-cleavage complex H protein] + CO2. The glycine cleavage system catalyzes the degradation of glycine. The P protein binds the alpha-amino group of glycine through its pyridoxal phosphate cofactor; CO(2) is released and the remaining methylamine moiety is then transferred to the lipoamide cofactor of the H protein. The sequence is that of Probable glycine dehydrogenase (decarboxylating) subunit 1 from Thermoplasma volcanium (strain ATCC 51530 / DSM 4299 / JCM 9571 / NBRC 15438 / GSS1).